The chain runs to 194 residues: Peptidyl-tRNA hydrolase (194 aa).

Tyr-16 is a binding site for tRNA. His-21 functions as the Proton acceptor in the catalytic mechanism. TRNA-binding residues include Phe-66, Asn-68, and Asn-114.

Belongs to the PTH family. As to quaternary structure, monomer.

It localises to the cytoplasm. The catalysed reaction is an N-acyl-L-alpha-aminoacyl-tRNA + H2O = an N-acyl-L-amino acid + a tRNA + H(+). Hydrolyzes ribosome-free peptidyl-tRNAs (with 1 or more amino acids incorporated), which drop off the ribosome during protein synthesis, or as a result of ribosome stalling. In terms of biological role, catalyzes the release of premature peptidyl moieties from peptidyl-tRNA molecules trapped in stalled 50S ribosomal subunits, and thus maintains levels of free tRNAs and 50S ribosomes. In Geobacter metallireducens (strain ATCC 53774 / DSM 7210 / GS-15), this protein is Peptidyl-tRNA hydrolase.